Reading from the N-terminus, the 528-residue chain is GMP synthase [glutamine-hydrolyzing] (528 aa).

The Glutamine amidotransferase type-1 domain maps to 13 to 204; it reads SILILDFGSQ…VYGISSCVAD (192 aa). Catalysis depends on cysteine 90, which acts as the Nucleophile. Catalysis depends on residues histidine 178 and glutamate 180. In terms of domain architecture, GMPS ATP-PPase spans 205–403; that stretch reads WTTETYIEET…LGLPDEIIKR (199 aa). 232–238 is an ATP binding site; it reads SGGVDSS.

As to quaternary structure, homodimer.

It carries out the reaction XMP + L-glutamine + ATP + H2O = GMP + L-glutamate + AMP + diphosphate + 2 H(+). Its pathway is purine metabolism; GMP biosynthesis; GMP from XMP (L-Gln route): step 1/1. Its function is as follows. Catalyzes the synthesis of GMP from XMP. The protein is GMP synthase [glutamine-hydrolyzing] of Prochlorococcus marinus (strain MIT 9312).